We begin with the raw amino-acid sequence, 668 residues long: DNA ligase (668 aa).

Residues aspartate 31–aspartate 35, serine 80–leucine 81, and glutamate 112 contribute to the NAD(+) site. Lysine 114 functions as the N6-AMP-lysine intermediate in the catalytic mechanism. The NAD(+) site is built by arginine 135, glutamate 172, lysine 289, and lysine 313. 4 residues coordinate Zn(2+): cysteine 407, cysteine 410, cysteine 425, and cysteine 431. The region spanning serine 591–asparagine 668 is the BRCT domain.

Belongs to the NAD-dependent DNA ligase family. LigA subfamily. Mg(2+) serves as cofactor. The cofactor is Mn(2+).

It carries out the reaction NAD(+) + (deoxyribonucleotide)n-3'-hydroxyl + 5'-phospho-(deoxyribonucleotide)m = (deoxyribonucleotide)n+m + AMP + beta-nicotinamide D-nucleotide.. Functionally, DNA ligase that catalyzes the formation of phosphodiester linkages between 5'-phosphoryl and 3'-hydroxyl groups in double-stranded DNA using NAD as a coenzyme and as the energy source for the reaction. It is essential for DNA replication and repair of damaged DNA. The polypeptide is DNA ligase (Aliivibrio fischeri (strain MJ11) (Vibrio fischeri)).